The following is a 157-amino-acid chain: Succinate dehydrogenase assembly factor 2-A, mitochondrial (157 aa).

It belongs to the SDHAF2 family. As to quaternary structure, interacts with the flavoprotein subunit within the SDH catalytic dimer.

It localises to the mitochondrion matrix. Plays an essential role in the assembly of succinate dehydrogenase (SDH), an enzyme complex (also referred to as respiratory complex II) that is a component of both the tricarboxylic acid (TCA) cycle and the mitochondrial electron transport chain, and which couples the oxidation of succinate to fumarate with the reduction of ubiquinone (coenzyme Q) to ubiquinol. Required for flavinylation (covalent attachment of FAD) of the flavoprotein subunit of the SDH catalytic dimer. This Drosophila willistoni (Fruit fly) protein is Succinate dehydrogenase assembly factor 2-A, mitochondrial.